Consider the following 412-residue polypeptide: MAEAARHPDDMKTPDELYRYLVDRVAGMESQNQELKEQIRQLESDKRYIETQKIRYEREVRKLKSEIEHLKTPPLIVGTITDIIDSGRVVVRSSAGPRFLVRVSQAVNPTTLKAGVRCTLNQQSLAIVEVLPSTYDSQVYGMELVDAPTETYEDIGGLEKQIMEIREAVELPMTRPDLFEKIGINPPKGVLLYGPPGTGKTLLAKAVAHETHAIFLHTVGSELVQKYIGEGARLVRELFDLAKEKAPSIVFIDEIDAIGASRTEAMTSGDREVQRTLMQLLAAMDGFEPRGDVKIIGATNRIDILDAALLRPGRFDRIIEIPLPDTEGRYSILKVHTRCMNLSEDVDLMEVARLTEGRNGAELNAICMEAGMFAIRKEHPQVDQEDFLTALNKFRCDFERDHRLTTAGVMFA.

A coiled-coil region spans residues 18–72 (YRYLVDRVAGMESQNQELKEQIRQLESDKRYIETQKIRYEREVRKLKSEIEHLKT). ATP is bound by residues 197–202 (GTGKTL) and His336. The interval 410-412 (MFA) is docks into pockets in the proteasome alpha-ring to cause gate opening.

This sequence belongs to the AAA ATPase family. As to quaternary structure, homohexamer. The hexameric complex has a two-ring architecture resembling a top hat that caps the 20S proteasome core at one or both ends. Upon ATP-binding, the C-terminus of PAN interacts with the alpha-rings of the proteasome core by binding to the intersubunit pockets.

It is found in the cytoplasm. Functionally, ATPase which is responsible for recognizing, binding, unfolding and translocation of substrate proteins into the archaeal 20S proteasome core particle. Is essential for opening the gate of the 20S proteasome via an interaction with its C-terminus, thereby allowing substrate entry and access to the site of proteolysis. Thus, the C-termini of the proteasomal ATPase function like a 'key in a lock' to induce gate opening and therefore regulate proteolysis. Unfolding activity requires energy from ATP hydrolysis, whereas ATP binding alone promotes ATPase-20S proteasome association which triggers gate opening, and supports translocation of unfolded substrates. This Methanospirillum hungatei JF-1 (strain ATCC 27890 / DSM 864 / NBRC 100397 / JF-1) protein is Proteasome-activating nucleotidase.